The chain runs to 189 residues: Chitin synthase 1 (189 aa).

Belongs to the chitin synthase family. Class I subfamily.

Its subcellular location is the cell membrane. The enzyme catalyses [(1-&gt;4)-N-acetyl-beta-D-glucosaminyl](n) + UDP-N-acetyl-alpha-D-glucosamine = [(1-&gt;4)-N-acetyl-beta-D-glucosaminyl](n+1) + UDP + H(+). Its function is as follows. Polymerizes chitin, a structural polymer of the cell wall and septum, by transferring the sugar moiety of UDP-GlcNAc to the non-reducing end of the growing chitin polymer. In Rhinocladiella atrovirens, this protein is Chitin synthase 1 (CHS1).